The following is a 125-amino-acid chain: uncharacterized protein (125 aa).

One can recognise a PRD domain in the interval 15–121 (QINQSIIDVI…HSLVLEQKQL (107 aa)).

This is an uncharacterized protein from Haemophilus influenzae (strain ATCC 51907 / DSM 11121 / KW20 / Rd).